The chain runs to 427 residues: Hydroxylamine reductase (427 aa).

[4Fe-4S] cluster contacts are provided by Cys-3, Cys-6, Cys-15, and Cys-21. Residues His-129, Glu-153, Cys-197, Cys-283, Cys-311, Cys-336, Glu-370, and Lys-372 each contribute to the hybrid [4Fe-2O-2S] cluster site. Cys-283 bears the Cysteine persulfide mark.

The protein belongs to the HCP family. Requires [4Fe-4S] cluster as cofactor. Hybrid [4Fe-2O-2S] cluster is required as a cofactor.

Its subcellular location is the cytoplasm. It catalyses the reaction A + NH4(+) + H2O = hydroxylamine + AH2 + H(+). Catalyzes the reduction of hydroxylamine to form NH(3) and H(2)O. This Moorella thermoacetica (strain ATCC 39073 / JCM 9320) protein is Hydroxylamine reductase.